The sequence spans 80 residues: Putative membrane protein insertion efficiency factor (80 aa).

This sequence belongs to the UPF0161 family.

It localises to the cell inner membrane. Its function is as follows. Could be involved in insertion of integral membrane proteins into the membrane. This chain is Putative membrane protein insertion efficiency factor, found in Kosmotoga olearia (strain ATCC BAA-1733 / DSM 21960 / TBF 19.5.1).